A 366-amino-acid polypeptide reads, in one-letter code: Glutamate 5-kinase (366 aa).

K17 contributes to the ATP binding site. Substrate contacts are provided by S57, D144, and N156. Residues 176-177 (SD) and 216-222 (TGGMASK) each bind ATP. The PUA domain maps to 278-352 (QGILHIDEGA…GKSTQELPAE (75 aa)).

It belongs to the glutamate 5-kinase family.

Its subcellular location is the cytoplasm. It carries out the reaction L-glutamate + ATP = L-glutamyl 5-phosphate + ADP. Its pathway is amino-acid biosynthesis; L-proline biosynthesis; L-glutamate 5-semialdehyde from L-glutamate: step 1/2. In terms of biological role, catalyzes the transfer of a phosphate group to glutamate to form L-glutamate 5-phosphate. This Rhodococcus jostii (strain RHA1) protein is Glutamate 5-kinase.